The chain runs to 312 residues: Transcription factor Ouib (312 aa).

A ZAD domain is found at 4–79; it reads IVCRVCGRQK…IKTQTKWLTI (76 aa). Cys-6, Cys-9, Cys-52, and Cys-55 together coordinate Zn(2+). 5 consecutive C2H2-type zinc fingers follow at residues 167–189, 195–217, 223–245, 251–273, and 279–303; these read YICE…MRKH, FGCK…HRVH, FACR…ERTH, YVCE…MVIH, and FRCD…SMMH.

As to expression, expressed predominantly in the prothoracic gland during embryonic and larval development.

The protein resides in the nucleus. In terms of biological role, transcription factor required for ecdysteroid production in the prothoracic gland by activating transcription of the ecdysteroid biosynthesis gene spok. Binds to the 5'-AGCTTTATTATTTAG-3' DNA sequence in the spok enhancer region. This chain is Transcription factor Ouib, found in Drosophila melanogaster (Fruit fly).